The chain runs to 725 residues: Homeobox-leucine zipper protein HDG3 (725 aa).

Residues 1 to 74 (MSQSNMVPVA…PRHKKKKYNR (74 aa)) form a disordered region. Positions 11-40 (NNGDNNNDNENNNNNNNNGGTDNTNAGNDS) are enriched in low complexity. The span at 46–64 (DSGNTSSGNHGEGLGNNQA) shows a compositional bias: polar residues. Residues 65-74 (PRHKKKKYNR) are compositionally biased toward basic residues. A DNA-binding region (homeobox) is located at residues 68–127 (KKKKYNRHTQLQISEMEAFFRECPHPDDKQRYDLSAQLGLDPVQIKFWFQNKRTQNKNQQ). Residues 117-201 (QNKRTQNKNQ…SVTAEKISRL (85 aa)) are a coiled coil. The 233-residue stretch at 243 to 475 (DANTKPIIME…LVRQCERISS (233 aa)) folds into the START domain.

Belongs to the HD-ZIP homeobox family. Class IV subfamily. In terms of assembly, interacts with AIL7/PLT7, ANT, BBM and AIL1. As to expression, expressed in siliques.

It localises to the nucleus. In terms of biological role, probable transcription factor. Seems to promote cell differentiation. The polypeptide is Homeobox-leucine zipper protein HDG3 (Arabidopsis thaliana (Mouse-ear cress)).